A 241-amino-acid polypeptide reads, in one-letter code: 1-(5-phosphoribosyl)-5-[(5-phosphoribosylamino)methylideneamino] imidazole-4-carboxamide isomerase (241 aa).

Asp8 functions as the Proton acceptor in the catalytic mechanism. The Proton donor role is filled by Asp130.

It belongs to the HisA/HisF family.

It is found in the cytoplasm. The enzyme catalyses 1-(5-phospho-beta-D-ribosyl)-5-[(5-phospho-beta-D-ribosylamino)methylideneamino]imidazole-4-carboxamide = 5-[(5-phospho-1-deoxy-D-ribulos-1-ylimino)methylamino]-1-(5-phospho-beta-D-ribosyl)imidazole-4-carboxamide. It participates in amino-acid biosynthesis; L-histidine biosynthesis; L-histidine from 5-phospho-alpha-D-ribose 1-diphosphate: step 4/9. The chain is 1-(5-phosphoribosyl)-5-[(5-phosphoribosylamino)methylideneamino] imidazole-4-carboxamide isomerase from Leptospira interrogans serogroup Icterohaemorrhagiae serovar copenhageni (strain Fiocruz L1-130).